We begin with the raw amino-acid sequence, 317 residues long: Ribose-phosphate pyrophosphokinase (317 aa).

ATP is bound by residues 41–43 (DME) and 100–101 (RQ). Residues H134 and D174 each coordinate Mg(2+). The active site involves K197. D-ribose 5-phosphate-binding positions include R199, D223, and 227–231 (DSGGT).

Belongs to the ribose-phosphate pyrophosphokinase family. Class I subfamily. In terms of assembly, homohexamer. The cofactor is Mg(2+).

The protein resides in the cytoplasm. The enzyme catalyses D-ribose 5-phosphate + ATP = 5-phospho-alpha-D-ribose 1-diphosphate + AMP + H(+). It functions in the pathway metabolic intermediate biosynthesis; 5-phospho-alpha-D-ribose 1-diphosphate biosynthesis; 5-phospho-alpha-D-ribose 1-diphosphate from D-ribose 5-phosphate (route I): step 1/1. Involved in the biosynthesis of the central metabolite phospho-alpha-D-ribosyl-1-pyrophosphate (PRPP) via the transfer of pyrophosphoryl group from ATP to 1-hydroxyl of ribose-5-phosphate (Rib-5-P). The protein is Ribose-phosphate pyrophosphokinase of Bradyrhizobium diazoefficiens (strain JCM 10833 / BCRC 13528 / IAM 13628 / NBRC 14792 / USDA 110).